A 637-amino-acid chain; its full sequence is ATP-dependent rRNA helicase SPB4 (637 aa).

Positions 10–38 match the Q motif motif; that stretch reads WENLRVDLEPWLKDAIRSLNYPTMTPVQA. Residues 41-236 enclose the Helicase ATP-binding domain; it reads IPLLSGNKDV…RTGMNNPVKL (196 aa). 54–61 provides a ligand contact to ATP; sequence AVTGSGKT. A DEAD box motif is present at residues 184–187; sequence DEAD. One can recognise a Helicase C-terminal domain in the interval 266 to 444; that stretch reads KLTTMLQMLR…KFQKKLRKYM (179 aa). The stretch at 528–597 forms a coiled coil; it reads SAEKARLENL…QLEAEQERGG (70 aa). The interval 554-637 is disordered; sequence LKVKNEAWSS…GVLQGSFDDL (84 aa). Composition is skewed to basic and acidic residues over residues 564 to 576 and 583 to 598; these read KTEK…ERKE and EAIE…RGGL. A compositionally biased stretch (gly residues) spans 621 to 630; sequence NGGGGGGGVL.

It belongs to the DEAD box helicase family. DDX55/SPB4 subfamily. As to quaternary structure, component of pre-60S ribosomal complexes.

Its subcellular location is the nucleus. It is found in the nucleolus. It carries out the reaction ATP + H2O = ADP + phosphate + H(+). Functionally, ATP-binding RNA helicase involved in the biogenesis of 60S ribosomal subunits. Binds 90S pre-ribosomal particles and dissociates from pre-60S ribosomal particles after processing of 27SB pre-rRNA. Required for the normal formation of 18S rRNA through the processing of pre-rRNAs at sites A0, A1 and A2, and the normal formation of 25S and 5.8S rRNAs through the processing of pre-rRNAs at sites C1 and C2. The protein is ATP-dependent rRNA helicase SPB4 of Lodderomyces elongisporus (strain ATCC 11503 / CBS 2605 / JCM 1781 / NBRC 1676 / NRRL YB-4239) (Yeast).